A 244-amino-acid chain; its full sequence is Flavin-dependent thymidylate synthase (244 aa).

Residues 2–207 form the ThyX domain; the sequence is VRVTLVNYTR…ELRPIIKWAK (206 aa). Residues serine 56, 80-82, and glutamine 88 each bind FAD; that span reads RHR. Residues 77–80, 88–92, and arginine 146 contribute to the dUMP site; these read QLVR and QQSQR. The short motif at 80-90 is the ThyX motif element; the sequence is RHRIASYTQQS. FAD contacts are provided by residues 162–164 and histidine 168; that span reads NLR. Residue arginine 173 participates in dUMP binding. Residue arginine 173 is the Involved in ionization of N3 of dUMP, leading to its activation of the active site.

Belongs to the thymidylate synthase ThyX family. In terms of assembly, homotetramer. The cofactor is FAD.

The enzyme catalyses dUMP + (6R)-5,10-methylene-5,6,7,8-tetrahydrofolate + NADPH + H(+) = dTMP + (6S)-5,6,7,8-tetrahydrofolate + NADP(+). It functions in the pathway pyrimidine metabolism; dTTP biosynthesis. Catalyzes the reductive methylation of 2'-deoxyuridine-5'-monophosphate (dUMP) to 2'-deoxythymidine-5'-monophosphate (dTMP) while utilizing 5,10-methylenetetrahydrofolate (mTHF) as the methyl donor, and NADPH and FADH(2) as the reductant. The protein is Flavin-dependent thymidylate synthase of Pyrococcus abyssi (strain GE5 / Orsay).